We begin with the raw amino-acid sequence, 327 residues long: tRNA pseudouridine synthase B (327 aa).

D69 serves as the catalytic Nucleophile. The substrate site is built by Y97, Y201, and L222.

Belongs to the pseudouridine synthase TruB family. Type 1 subfamily.

It catalyses the reaction uridine(55) in tRNA = pseudouridine(55) in tRNA. In terms of biological role, responsible for synthesis of pseudouridine from uracil-55 in the psi GC loop of transfer RNAs. The chain is tRNA pseudouridine synthase B from Wigglesworthia glossinidia brevipalpis.